We begin with the raw amino-acid sequence, 181 residues long: Cytidylate kinase (181 aa).

An ATP-binding site is contributed by 12–20 (GLAGSGTTT).

The protein belongs to the cytidylate kinase family. Type 2 subfamily.

It localises to the cytoplasm. It carries out the reaction CMP + ATP = CDP + ADP. The enzyme catalyses dCMP + ATP = dCDP + ADP. This chain is Cytidylate kinase (cmk), found in Pyrococcus abyssi (strain GE5 / Orsay).